A 150-amino-acid polypeptide reads, in one-letter code: MKVIFLADVKGKGKKGEIKEMPTGYAQNFLIKKNLAKEATAQAIGELRGKQKSEEKAHAELVAEAQSIKAKLAEEATLVEFTEKVGPDGRTFGSITSKKIAEELQKQFGIKIDKRHIKVDSPIRSIGLIDVPVKIYQDIAGVIRLRVKEG.

The protein belongs to the bacterial ribosomal protein bL9 family.

Functionally, binds to the 23S rRNA. The chain is Large ribosomal subunit protein bL9 from Streptococcus sanguinis (strain SK36).